We begin with the raw amino-acid sequence, 393 residues long: Pre-mRNA-splicing regulator WTAP (393 aa).

Residues glutamine 240–leucine 393 are disordered. Over residues glutamate 254–glycine 267 the composition is skewed to basic and acidic residues. Residues glycine 272 to serine 286 show a composition bias toward polar residues. Over residues leucine 310 to serine 319 the composition is skewed to basic and acidic residues. Over residues arginine 320–threonine 353 the composition is skewed to polar residues. Residues aspartate 354–valine 365 show a composition bias toward basic and acidic residues. Positions glycine 369–leucine 393 are enriched in polar residues.

It belongs to the fl(2)d family. Component of the WMM complex, a N6-methyltransferase complex composed of a catalytic subcomplex, named MAC, and of an associated subcomplex, named MACOM. Component of the MACOM subcomplex.

The protein resides in the nucleus speckle. It localises to the nucleus. It is found in the nucleoplasm. Functionally, associated component of the WMM complex, a complex that mediates N6-methyladenosine (m6A) methylation of RNAs, a modification that plays a role in the efficiency of mRNA splicing and RNA processing. The sequence is that of Pre-mRNA-splicing regulator WTAP from Xenopus tropicalis (Western clawed frog).